Here is a 165-residue protein sequence, read N- to C-terminus: Crossover junction endodeoxyribonuclease RuvC (165 aa).

Active-site residues include D7, E66, and D138. D7, E66, and D138 together coordinate Mg(2+).

Belongs to the RuvC family. As to quaternary structure, homodimer which binds Holliday junction (HJ) DNA. The HJ becomes 2-fold symmetrical on binding to RuvC with unstacked arms; it has a different conformation from HJ DNA in complex with RuvA. In the full resolvosome a probable DNA-RuvA(4)-RuvB(12)-RuvC(2) complex forms which resolves the HJ. Requires Mg(2+) as cofactor.

It localises to the cytoplasm. It carries out the reaction Endonucleolytic cleavage at a junction such as a reciprocal single-stranded crossover between two homologous DNA duplexes (Holliday junction).. The RuvA-RuvB-RuvC complex processes Holliday junction (HJ) DNA during genetic recombination and DNA repair. Endonuclease that resolves HJ intermediates. Cleaves cruciform DNA by making single-stranded nicks across the HJ at symmetrical positions within the homologous arms, yielding a 5'-phosphate and a 3'-hydroxyl group; requires a central core of homology in the junction. The consensus cleavage sequence is 5'-(A/T)TT(C/G)-3'. Cleavage occurs on the 3'-side of the TT dinucleotide at the point of strand exchange. HJ branch migration catalyzed by RuvA-RuvB allows RuvC to scan DNA until it finds its consensus sequence, where it cleaves and resolves the cruciform DNA. The chain is Crossover junction endodeoxyribonuclease RuvC from Ruegeria pomeroyi (strain ATCC 700808 / DSM 15171 / DSS-3) (Silicibacter pomeroyi).